The sequence spans 363 residues: Protein disulfide-isomerase 1 (363 aa).

The N-terminal stretch at 1-20 (MKILLFVTLIALAFVALCSA) is a signal peptide. 2 consecutive Thioredoxin domains span residues 21-132 (EGNV…NHAK) and 133-285 (TNVK…AAAE). Active-site nucleophile residues include cysteine 51, cysteine 54, cysteine 172, and cysteine 175. Disulfide bonds link cysteine 51–cysteine 54 and cysteine 172–cysteine 175.

It belongs to the protein disulfide isomerase family.

It localises to the endoplasmic reticulum lumen. The enzyme catalyses Catalyzes the rearrangement of -S-S- bonds in proteins.. Participates in the folding of proteins containing disulfide bonds, may be involved in glycosylation, prolyl hydroxylation and triglyceride transfer. This is Protein disulfide-isomerase 1 (pdi1) from Dictyostelium discoideum (Social amoeba).